The sequence spans 504 residues: E3 ubiquitin-protein ligase dbl4 (504 aa).

Residues 127–338 (HEGTCEICYD…NNWYTCNRYE (212 aa)) are TRIAD supradomain. Residues C131, C134, C147, H149, C152, C155, C173, C178, C217, C222, C244, C246, C251, C254, H259, C264, C291, and C294 each contribute to the Zn(2+) site. The RING-type 1 zinc finger occupies 131–178 (CEICYDEGCLPFFSAECDHEFCLACYRQYLDSRISEGESVIQCPEESC). An IBR-type zinc finger spans residues 197–264 (DRYHRLLDRS…GHDNHQPTIC (68 aa)). The segment at 291-320 (CPKCSTTIEKNGGCNHMTCKKCKYEFCWVC) adopts an RING-type 2; atypical zinc-finger fold. C304 is a catalytic residue. Positions 309, 312, 317, 320, 327, and 334 each coordinate Zn(2+).

This sequence belongs to the RBR family.

Its subcellular location is the cytoplasm. The protein resides in the nucleus. It carries out the reaction [E2 ubiquitin-conjugating enzyme]-S-ubiquitinyl-L-cysteine + [acceptor protein]-L-lysine = [E2 ubiquitin-conjugating enzyme]-L-cysteine + [acceptor protein]-N(6)-ubiquitinyl-L-lysine.. The protein operates within protein modification; protein ubiquitination. In terms of biological role, probable ubiquitin-protein ligase involved in the degradation-related ubiquitination of histones. Contributes to the post-translational regulation of histone protein levels by polyubiquitination of excess histones for subsequent degradation. This chain is E3 ubiquitin-protein ligase dbl4, found in Schizosaccharomyces pombe (strain 972 / ATCC 24843) (Fission yeast).